The chain runs to 435 residues: Hydrogenobyrinate a,c-diamide synthase (435 aa).

Positions 247-435 (RIALARDAAF…TGSFFHLIAG (189 aa)) constitute a GATase cobBQ-type domain. The Nucleophile role is filled by C329.

This sequence belongs to the CobB/CbiA family. Mg(2+) is required as a cofactor.

The enzyme catalyses hydrogenobyrinate + 2 L-glutamine + 2 ATP + 2 H2O = hydrogenobyrinate a,c-diamide + 2 L-glutamate + 2 ADP + 2 phosphate + 2 H(+). The protein operates within cofactor biosynthesis; adenosylcobalamin biosynthesis; cob(II)yrinate a,c-diamide from precorrin-2 (aerobic route): step 9/10. Functionally, catalyzes the ATP-dependent amidation of the two carboxylate groups at positions a and c of hydrogenobyrinate, using either L-glutamine or ammonia as the nitrogen source. The polypeptide is Hydrogenobyrinate a,c-diamide synthase (Rhodobacter capsulatus (strain ATCC BAA-309 / NBRC 16581 / SB1003)).